A 347-amino-acid polypeptide reads, in one-letter code: Protein RecA (347 aa).

68–75 (GPESSGKT) serves as a coordination point for ATP.

It belongs to the RecA family.

Its subcellular location is the cytoplasm. Can catalyze the hydrolysis of ATP in the presence of single-stranded DNA, the ATP-dependent uptake of single-stranded DNA by duplex DNA, and the ATP-dependent hybridization of homologous single-stranded DNAs. It interacts with LexA causing its activation and leading to its autocatalytic cleavage. This is Protein RecA from Rhodococcus jostii (strain RHA1).